A 526-amino-acid chain; its full sequence is Bifunctional purine biosynthesis protein PurH (526 aa).

The MGS-like domain occupies M1 to T145.

It belongs to the PurH family.

The enzyme catalyses (6R)-10-formyltetrahydrofolate + 5-amino-1-(5-phospho-beta-D-ribosyl)imidazole-4-carboxamide = 5-formamido-1-(5-phospho-D-ribosyl)imidazole-4-carboxamide + (6S)-5,6,7,8-tetrahydrofolate. It catalyses the reaction IMP + H2O = 5-formamido-1-(5-phospho-D-ribosyl)imidazole-4-carboxamide. The protein operates within purine metabolism; IMP biosynthesis via de novo pathway; 5-formamido-1-(5-phospho-D-ribosyl)imidazole-4-carboxamide from 5-amino-1-(5-phospho-D-ribosyl)imidazole-4-carboxamide (10-formyl THF route): step 1/1. Its pathway is purine metabolism; IMP biosynthesis via de novo pathway; IMP from 5-formamido-1-(5-phospho-D-ribosyl)imidazole-4-carboxamide: step 1/1. The sequence is that of Bifunctional purine biosynthesis protein PurH from Psychrobacter arcticus (strain DSM 17307 / VKM B-2377 / 273-4).